A 262-amino-acid chain; its full sequence is Phosphatidylglycerol--prolipoprotein diacylglyceryl transferase (262 aa).

Transmembrane regions (helical) follow at residues 9 to 29, 41 to 61, 80 to 100, and 109 to 129; these read LGPLAIRWYALCIVTGLILAV, IIPDDILDFILVAFPLAILGA, IFAIWNGGLAIYGGLITGALV, and LINTWDFLDIAAPSVMIAQSL. Arg-131 provides a ligand contact to a 1,2-diacyl-sn-glycero-3-phospho-(1'-sn-glycerol). Helical transmembrane passes span 167–187, 197–217, and 226–246; these read QPTFLYESLWNLLGFALILIF, GHITAFYLIWYGFGRMVIEGM, and GLRVSQWLSVVFIGLGIMIVI.

Belongs to the Lgt family.

The protein resides in the cell membrane. It catalyses the reaction L-cysteinyl-[prolipoprotein] + a 1,2-diacyl-sn-glycero-3-phospho-(1'-sn-glycerol) = an S-1,2-diacyl-sn-glyceryl-L-cysteinyl-[prolipoprotein] + sn-glycerol 1-phosphate + H(+). It participates in protein modification; lipoprotein biosynthesis (diacylglyceryl transfer). Catalyzes the transfer of the diacylglyceryl group from phosphatidylglycerol to the sulfhydryl group of the N-terminal cysteine of a prolipoprotein, the first step in the formation of mature lipoproteins. The protein is Phosphatidylglycerol--prolipoprotein diacylglyceryl transferase of Streptococcus pneumoniae (strain ATCC 700669 / Spain 23F-1).